Reading from the N-terminus, the 129-residue chain is Follitropin subunit beta (129 aa).

The first 18 residues, 1 to 18 (MKTLQFFFLFCCWKAICC), serve as a signal peptide directing secretion. 6 cysteine pairs are disulfide-bonded: Cys-21–Cys-69, Cys-35–Cys-84, Cys-38–Cys-122, Cys-46–Cys-100, Cys-50–Cys-102, and Cys-105–Cys-112. 2 N-linked (GlcNAc...) asparagine glycosylation sites follow: Asn-25 and Asn-42.

This sequence belongs to the glycoprotein hormones subunit beta family. Heterodimer. The active follitropin is a heterodimer composed of an alpha chain/CGA shared with other hormones and a unique beta chain/FSHB shown here.

The protein resides in the secreted. In terms of biological role, together with the alpha chain CGA constitutes follitropin, the follicle-stimulating hormone, and provides its biological specificity to the hormone heterodimer. Binds FSHR, a G protein-coupled receptor, on target cells to activate downstream signaling pathways. Follitropin is involved in follicle development and spermatogenesis in reproductive organs. The chain is Follitropin subunit beta (FSHB) from Homo sapiens (Human).